The sequence spans 472 residues: Aspartyl/glutamyl-tRNA(Asn/Gln) amidotransferase subunit B (472 aa).

It belongs to the GatB/GatE family. GatB subfamily. In terms of assembly, heterotrimer of A, B and C subunits.

It catalyses the reaction L-glutamyl-tRNA(Gln) + L-glutamine + ATP + H2O = L-glutaminyl-tRNA(Gln) + L-glutamate + ADP + phosphate + H(+). It carries out the reaction L-aspartyl-tRNA(Asn) + L-glutamine + ATP + H2O = L-asparaginyl-tRNA(Asn) + L-glutamate + ADP + phosphate + 2 H(+). Allows the formation of correctly charged Asn-tRNA(Asn) or Gln-tRNA(Gln) through the transamidation of misacylated Asp-tRNA(Asn) or Glu-tRNA(Gln) in organisms which lack either or both of asparaginyl-tRNA or glutaminyl-tRNA synthetases. The reaction takes place in the presence of glutamine and ATP through an activated phospho-Asp-tRNA(Asn) or phospho-Glu-tRNA(Gln). The protein is Aspartyl/glutamyl-tRNA(Asn/Gln) amidotransferase subunit B of Campylobacter jejuni subsp. doylei (strain ATCC BAA-1458 / RM4099 / 269.97).